The following is a 94-amino-acid chain: Small ribosomal subunit protein uS19 (94 aa).

Belongs to the universal ribosomal protein uS19 family.

In terms of biological role, protein S19 forms a complex with S13 that binds strongly to the 16S ribosomal RNA. In Endomicrobium trichonymphae, this protein is Small ribosomal subunit protein uS19.